The following is a 220-amino-acid chain: Thiamine-phosphate synthase (220 aa).

Residues 38-42 (QYRDK) and Asn70 each bind 4-amino-2-methyl-5-(diphosphooxymethyl)pyrimidine. The Mg(2+) site is built by Asp71 and Asp90. Thr109 is a binding site for 4-amino-2-methyl-5-(diphosphooxymethyl)pyrimidine. A 2-[(2R,5Z)-2-carboxy-4-methylthiazol-5(2H)-ylidene]ethyl phosphate-binding site is contributed by 135 to 137 (TVS). Lys138 is a 4-amino-2-methyl-5-(diphosphooxymethyl)pyrimidine binding site. 2-[(2R,5Z)-2-carboxy-4-methylthiazol-5(2H)-ylidene]ethyl phosphate-binding positions include Gly171 and 191-192 (IS).

It belongs to the thiamine-phosphate synthase family. The cofactor is Mg(2+).

The enzyme catalyses 2-[(2R,5Z)-2-carboxy-4-methylthiazol-5(2H)-ylidene]ethyl phosphate + 4-amino-2-methyl-5-(diphosphooxymethyl)pyrimidine + 2 H(+) = thiamine phosphate + CO2 + diphosphate. The catalysed reaction is 2-(2-carboxy-4-methylthiazol-5-yl)ethyl phosphate + 4-amino-2-methyl-5-(diphosphooxymethyl)pyrimidine + 2 H(+) = thiamine phosphate + CO2 + diphosphate. It catalyses the reaction 4-methyl-5-(2-phosphooxyethyl)-thiazole + 4-amino-2-methyl-5-(diphosphooxymethyl)pyrimidine + H(+) = thiamine phosphate + diphosphate. The protein operates within cofactor biosynthesis; thiamine diphosphate biosynthesis; thiamine phosphate from 4-amino-2-methyl-5-diphosphomethylpyrimidine and 4-methyl-5-(2-phosphoethyl)-thiazole: step 1/1. Condenses 4-methyl-5-(beta-hydroxyethyl)thiazole monophosphate (THZ-P) and 2-methyl-4-amino-5-hydroxymethyl pyrimidine pyrophosphate (HMP-PP) to form thiamine monophosphate (TMP). In Agrobacterium fabrum (strain C58 / ATCC 33970) (Agrobacterium tumefaciens (strain C58)), this protein is Thiamine-phosphate synthase.